The primary structure comprises 411 residues: Squalene synthase (411 aa).

2 helical membrane-spanning segments follow: residues 281 to 301 (SIFR…AMCY) and 388 to 408 (SPVL…QLSG).

It belongs to the phytoene/squalene synthase family. It depends on Mg(2+) as a cofactor.

It localises to the endoplasmic reticulum membrane. It carries out the reaction 2 (2E,6E)-farnesyl diphosphate + NADPH + H(+) = squalene + 2 diphosphate + NADP(+). It catalyses the reaction 2 (2E,6E)-farnesyl diphosphate + NADH + H(+) = squalene + 2 diphosphate + NAD(+). It participates in terpene metabolism; lanosterol biosynthesis; lanosterol from farnesyl diphosphate: step 1/3. In Nicotiana benthamiana, this protein is Squalene synthase.